A 478-amino-acid chain; its full sequence is Glycogen synthase (478 aa).

An ADP-alpha-D-glucose-binding site is contributed by Lys15.

This sequence belongs to the glycosyltransferase 1 family. Bacterial/plant glycogen synthase subfamily.

It catalyses the reaction [(1-&gt;4)-alpha-D-glucosyl](n) + ADP-alpha-D-glucose = [(1-&gt;4)-alpha-D-glucosyl](n+1) + ADP + H(+). Its pathway is glycan biosynthesis; glycogen biosynthesis. Functionally, synthesizes alpha-1,4-glucan chains using ADP-glucose. The polypeptide is Glycogen synthase (Clostridium botulinum (strain Eklund 17B / Type B)).